Here is a 300-residue protein sequence, read N- to C-terminus: Light-independent protochlorophyllide reductase iron-sulfur ATP-binding protein (300 aa).

Residues 43 to 48 (GIGKST) and lysine 72 each bind ATP. Serine 47 is a binding site for Mg(2+). [4Fe-4S] cluster-binding residues include cysteine 128 and cysteine 162. ATP is bound at residue 213-214 (NR).

It belongs to the NifH/BchL/ChlL family. In terms of assembly, homodimer. Protochlorophyllide reductase is composed of three subunits; ChlL, ChlN and ChlB. It depends on [4Fe-4S] cluster as a cofactor.

The enzyme catalyses chlorophyllide a + oxidized 2[4Fe-4S]-[ferredoxin] + 2 ADP + 2 phosphate = protochlorophyllide a + reduced 2[4Fe-4S]-[ferredoxin] + 2 ATP + 2 H2O. It participates in porphyrin-containing compound metabolism; chlorophyll biosynthesis (light-independent). Functionally, component of the dark-operative protochlorophyllide reductase (DPOR) that uses Mg-ATP and reduced ferredoxin to reduce ring D of protochlorophyllide (Pchlide) to form chlorophyllide a (Chlide). This reaction is light-independent. The L component serves as a unique electron donor to the NB-component of the complex, and binds Mg-ATP. This Synechococcus sp. (strain RCC307) protein is Light-independent protochlorophyllide reductase iron-sulfur ATP-binding protein.